The primary structure comprises 390 residues: Probable tRNA pseudouridine synthase D 2 (390 aa).

Asp93 functions as the Nucleophile in the catalytic mechanism. The TRUD domain occupies 166-353 (YVLNYYGIQR…YGTRRKMVTP (188 aa)).

Belongs to the pseudouridine synthase TruD family.

The enzyme catalyses uridine(13) in tRNA = pseudouridine(13) in tRNA. In terms of biological role, could be responsible for synthesis of pseudouridine from uracil-13 in transfer RNAs. The polypeptide is Probable tRNA pseudouridine synthase D 2 (Methanococcus maripaludis (strain DSM 14266 / JCM 13030 / NBRC 101832 / S2 / LL)).